A 256-amino-acid chain; its full sequence is Nuclear shuttle protein (256 aa).

Residues 18–50 form a disordered region; sequence VSRNQSSKRGTFVRRTDGKRRKGPSSKAHDEPK. The Bipartite nuclear localization signal signature appears at 21–42; that stretch reads NQSSKRGTFVRRTDGKRRKGPS. The short motif at 81–96 is the Nuclear localization signal element; the sequence is VLGKIEPNRSRSYIKL. The tract at residues 150 to 187 is interaction with Arabidopsis thaliana NSI protein; sequence EIFGARIHSHGNLAITPGLKDRYYVLHVLKRVLSVEKD.

Belongs to the begomovirus nuclear shuttle protein family. Binds to single-stranded and double-stranded viral DNA. Interacts with the host nuclear shuttle interacting (NSI) protein. This interaction may allow NSP to recruit NSI monomers to the viral genome and thus regulate nuclear export of viral genome by NSP.

Its subcellular location is the host nucleus. The protein resides in the host cytoplasm. It is found in the host cell membrane. In terms of biological role, binds to the genomic viral ssDNA, shuttles it into and out of the cell nucleus. Begomoviruses use 2 proteins to transport their DNA from cell to cell. The nuclear shuttle protein (NSP) shuttles it between nucleus and cytoplasm and the movement protein (MP) probably transports the DNA-NSP complex to the cell periphery and facilitates movement across the cell wall. The chain is Nuclear shuttle protein from Brassica oleracea (Wild cabbage).